The sequence spans 134 residues: Cytochrome b (134 aa).

The next 3 helical transmembrane spans lie at F33–M53, W77–V98, and W113–L133. Heme b contacts are provided by H83 and H97.

It belongs to the cytochrome b family. The cytochrome bc1 complex contains 11 subunits: 3 respiratory subunits (MT-CYB, CYC1 and UQCRFS1), 2 core proteins (UQCRC1 and UQCRC2) and 6 low-molecular weight proteins (UQCRH/QCR6, UQCRB/QCR7, UQCRQ/QCR8, UQCR10/QCR9, UQCR11/QCR10 and a cleavage product of UQCRFS1). This cytochrome bc1 complex then forms a dimer. Requires heme b as cofactor.

The protein resides in the mitochondrion inner membrane. In terms of biological role, component of the ubiquinol-cytochrome c reductase complex (complex III or cytochrome b-c1 complex) that is part of the mitochondrial respiratory chain. The b-c1 complex mediates electron transfer from ubiquinol to cytochrome c. Contributes to the generation of a proton gradient across the mitochondrial membrane that is then used for ATP synthesis. The sequence is that of Cytochrome b (MT-CYB) from Microtus subterraneus (European pine vole).